The sequence spans 346 residues: O-methyltransferase atr3 (346 aa).

Disordered regions lie at residues 1-22 and 52-88; these read MTSV…DDLM and GLKS…WYHA. Residues 190–191 and 217–218 each bind S-adenosyl-L-methionine; these read DL and DI.

The protein belongs to the class I-like SAM-binding methyltransferase superfamily. As to quaternary structure, homodimer.

It carries out the reaction 4-O-demethylbarbatate + S-adenosyl-L-methionine = proatranorin I + S-adenosyl-L-homocysteine. Its pathway is secondary metabolite biosynthesis; terpenoid biosynthesis. In terms of biological role, O-methyltransferase; part of the gene cluster that mediates the biosynthesis of atranorin, a depside of polyketide origin that accumulates in the cortical or medullary layers of lichen thalli. Atr3 methylates the carboxyl group of 4-O-demethylbarbatic acid to yield proatranorin I. Atr3 is also able to methylate the atr2 product proatranorin III to produce the final compound atranorin. The first step in the pathway is performed by the non-reducing polyketide synthase atr1 that produces 4-O-demethylbarbatic acid composed of two 3-methylorsellinic acid (3MOA) moieties. The pathway continues with the actions of the cytochrome P450 monooygenase atr2 that catalizes the oxidation of c-9 and the O-methyltransferase atr3 that performs the methylation of the carboxyl group to yield atranorin, via the proatranorin II and III intermediates if atr2 acts first, or the proatranorin I intermediate if atr3 acts first. The sequence is that of O-methyltransferase atr3 from Stereocaulon alpinum (Alpine snow lichen).